The sequence spans 255 residues: 28.1 kDa virulence protein (255 aa).

It belongs to the SpvA family.

In terms of biological role, not known. This protein is involved in the virulence of salmonellas. This chain is 28.1 kDa virulence protein (mkaB), found in Salmonella typhimurium.